The primary structure comprises 87 residues: Small ribosomal subunit protein bS20 (87 aa).

Belongs to the bacterial ribosomal protein bS20 family.

Binds directly to 16S ribosomal RNA. This chain is Small ribosomal subunit protein bS20, found in Clostridium perfringens (strain 13 / Type A).